The following is a 520-amino-acid chain: Calcium and calcium/calmodulin-dependent serine/threonine-protein kinase (520 aa).

Positions 13 to 302 (YEVVDVLGKG…ANDLLKHPWV (290 aa)) constitute a Protein kinase domain. Residues 19-27 (LGKGGFSVV) and Lys-44 contribute to the ATP site. Catalysis depends on Asp-167, which acts as the Proton acceptor. A helical transmembrane segment spans residues 227-243 (MWSLGVILYILLSGCPP). Thr-267 bears the Phosphothreonine; by autocatalysis mark. Residues 325 to 338 (ARRKLRAAAIASVL) form a calmodulin-binding region. The stretch at 346–368 (TKKLKNLLGSHDMKSEELENLRA) forms a coiled coil. EF-hand domains follow at residues 361 to 395 (EELE…MKMN), 396 to 431 (SLIP…LRNS), 432 to 467 (QGDD…LPED), and 474 to 509 (TEPG…DSSL). 14 residues coordinate Ca(2+): Asp-409, Asn-411, Asp-413, Thr-415, Glu-420, Asp-445, Asp-447, Ser-449, Cys-451, Glu-456, Asp-487, Asn-489, Asp-491, and Glu-498.

It belongs to the protein kinase superfamily. CAMK Ser/Thr protein kinase family. CaMK subfamily. Autophosphorylation stimulated by calcium and inhibited by calcium/calmodulin. Occurs probably by an intermolecular mechanism.

It is found in the membrane. The catalysed reaction is L-seryl-[protein] + ATP = O-phospho-L-seryl-[protein] + ADP + H(+). It carries out the reaction L-threonyl-[protein] + ATP = O-phospho-L-threonyl-[protein] + ADP + H(+). Activated by calcium/calmodulin binding after calcium-induced autophosphorylation. Autophosphorylation is associated with a time-dependent loss of kinase activity sensitive to reaction pH and ATP concentration. In vitro inactivation leads to the formation of network-like structures. Protein kinase that may be involved in microsporogenesis. The protein is Calcium and calcium/calmodulin-dependent serine/threonine-protein kinase (CCAMK) of Lilium longiflorum (Trumpet lily).